A 679-amino-acid chain; its full sequence is DNA ligase (679 aa).

Residues 36 to 40 (DEYYD) and 94 to 95 (SL) each bind NAD(+). Lys126 (N6-AMP-lysine intermediate) is an active-site residue. Arg147, Glu181, Lys299, and Lys323 together coordinate NAD(+). Residues Cys415, Cys418, Cys433, and Cys438 each contribute to the Zn(2+) site. In terms of domain architecture, BRCT spans 603–679 (IQSTKLENKT…DEEFLKKMLE (77 aa)).

The protein belongs to the NAD-dependent DNA ligase family. LigA subfamily. Mg(2+) serves as cofactor. The cofactor is Mn(2+).

The catalysed reaction is NAD(+) + (deoxyribonucleotide)n-3'-hydroxyl + 5'-phospho-(deoxyribonucleotide)m = (deoxyribonucleotide)n+m + AMP + beta-nicotinamide D-nucleotide.. Its function is as follows. DNA ligase that catalyzes the formation of phosphodiester linkages between 5'-phosphoryl and 3'-hydroxyl groups in double-stranded DNA using NAD as a coenzyme and as the energy source for the reaction. It is essential for DNA replication and repair of damaged DNA. In Mycoplasmopsis pulmonis (strain UAB CTIP) (Mycoplasma pulmonis), this protein is DNA ligase.